We begin with the raw amino-acid sequence, 138 residues long: MRTLWIMAVLLVGVEGHLLQFRKMIKKMTGKEPIVSYAFYGCYCGKGGRGKPKDATDRCCFVHDCCYEKVTGCDPKWDYYTYSSENGDIVCGGDNPCTKEVCECDKAAAICFRDNLKTYKKRYMTFPDIFCTDPTEKC.

The signal sequence occupies residues 1 to 16 (MRTLWIMAVLLVGVEG). 7 disulfides stabilise this stretch: Cys42–Cys131, Cys44–Cys60, Cys59–Cys111, Cys65–Cys138, Cys66–Cys104, Cys73–Cys97, and Cys91–Cys102. Positions 43, 45, and 47 each coordinate Ca(2+). Residue His63 is part of the active site. Asp64 is a binding site for Ca(2+). Asp105 is a catalytic residue.

It belongs to the phospholipase A2 family. Group II subfamily. D49 sub-subfamily. Ca(2+) is required as a cofactor. In terms of tissue distribution, expressed by the venom gland.

The protein localises to the secreted. The enzyme catalyses a 1,2-diacyl-sn-glycero-3-phosphocholine + H2O = a 1-acyl-sn-glycero-3-phosphocholine + a fatty acid + H(+). PLA2 catalyzes the calcium-dependent hydrolysis of the 2-acyl groups in 3-sn-phosphoglycerides. This Protobothrops flavoviridis (Habu) protein is Basic phospholipase A2 PL-X'.